The sequence spans 398 residues: Acetate kinase (398 aa).

Asn-9 contacts Mg(2+). Lys-16 contacts ATP. Arg-90 contributes to the substrate binding site. Asp-147 acts as the Proton donor/acceptor in catalysis. ATP contacts are provided by residues 207 to 211 (HIGNG), 282 to 284 (DLR), and 330 to 334 (GVGEN). Glu-384 serves as a coordination point for Mg(2+).

Belongs to the acetokinase family. In terms of assembly, homodimer. The cofactor is Mg(2+). Mn(2+) serves as cofactor.

The protein resides in the cytoplasm. It carries out the reaction acetate + ATP = acetyl phosphate + ADP. It functions in the pathway metabolic intermediate biosynthesis; acetyl-CoA biosynthesis; acetyl-CoA from acetate: step 1/2. Its function is as follows. Catalyzes the formation of acetyl phosphate from acetate and ATP. Can also catalyze the reverse reaction. The protein is Acetate kinase of Staphylococcus haemolyticus (strain JCSC1435).